Here is a 442-residue protein sequence, read N- to C-terminus: MSELKERLLPPRPASAMNLRDASVTRPSASGRPPLLGVDVLGLKKRGQGLRSWIRVDTSGNTQVMEVDKFTMMRRCDLPARDLRLLDPLFVYPSTILGREKAIVVNLEQIRCIITADEVLLLNSLDNYVLRYVVELQQRLKTSSVGEMWQQENSQLSRRRSRSFDNAFENSSPDYLPFEFRALEIALEAACTFLDSQASELEIEAYPLLDELTSKISTLNLERVRRLKSRLVALTRRVQKVRDEIEQLMDDDGDMAEMYLTEKKRRMEGSMYGDQSLLGYRSNDGLSVSAPVSPVSSPPDSRRLDKSLSIARSRHDSARSSEGAENIEELEMLLEAYFVVIDSTLNKLTSLKEYIDDTEDFINIQLDNVRNQLIQFELLLTTATFVVAIFGVVAGIFGMNFEIDFFNQPGAFRWVLIITGVCGFVIFSAFVWFFKYRRLMPL.

The disordered stretch occupies residues Met-1 to Ser-30. 2 helical membrane-spanning segments follow: residues Leu-378 to Gly-398 and Trp-414 to Phe-434. Positions Gly-398–Asn-400 match the Required for magnesium transport activity motif.

It belongs to the CorA metal ion transporter (MIT) (TC 1.A.35.5) family. Expressed in the whole plant except stems.

Its subcellular location is the membrane. Magnesium transporter that may mediate the influx of magnesium. This chain is Magnesium transporter MRS2-1 (MRS2-1), found in Arabidopsis thaliana (Mouse-ear cress).